The following is a 199-amino-acid chain: ATP-dependent Clp protease proteolytic subunit (199 aa).

Catalysis depends on S98, which acts as the Nucleophile. The active site involves H123.

This sequence belongs to the peptidase S14 family. Fourteen ClpP subunits assemble into 2 heptameric rings which stack back to back to give a disk-like structure with a central cavity, resembling the structure of eukaryotic proteasomes.

It localises to the cytoplasm. The enzyme catalyses Hydrolysis of proteins to small peptides in the presence of ATP and magnesium. alpha-casein is the usual test substrate. In the absence of ATP, only oligopeptides shorter than five residues are hydrolyzed (such as succinyl-Leu-Tyr-|-NHMec, and Leu-Tyr-Leu-|-Tyr-Trp, in which cleavage of the -Tyr-|-Leu- and -Tyr-|-Trp bonds also occurs).. Its function is as follows. Cleaves peptides in various proteins in a process that requires ATP hydrolysis. Has a chymotrypsin-like activity. Plays a major role in the degradation of misfolded proteins. In Ehrlichia chaffeensis (strain ATCC CRL-10679 / Arkansas), this protein is ATP-dependent Clp protease proteolytic subunit.